We begin with the raw amino-acid sequence, 535 residues long: Arginine-containing cyclodipeptide synthase anoA (535 aa).

The disordered stretch occupies residues 93 to 114; sequence LLSPPREPGPIDSETKTREKKS. Residues 105-114 show a composition bias toward basic and acidic residues; sequence SETKTREKKS. A Conserved DDXXE motif motif is present at residues 424–428; it reads DDIAE.

Belongs to the arginine-containing cyclodipeptide synthase family.

The enzyme catalyses L-tryptophyl-tRNA(Trp) + L-arginyl-tRNA(Arg) = cyclo(L-arginyl-L-tryptophyl) + tRNA(Trp) + tRNA(Arg) + H(+). The protein operates within secondary metabolite biosynthesis. Its function is as follows. Arginine-containing cyclodipeptide synthase; part of the cluster that mediates the biosynthesis of a highly modified cyclo-arginine-tryptophan dipeptide (cRW). Within the pathway, AnoA acts as the scaffold-generating enzyme and is responsible for formation of the cyclo-Arg-Trp diketopiperazine (cRW) from L-arginyl-tRNA(Arg) + L-tryptophanyl-tRNA(Trp). Additional enzymes from the cluster then further modify the cyclo-Arg-Asp diketopiperazine (cRW) scaffold. The sequence is that of Arginine-containing cyclodipeptide synthase anoA from Aspergillus nomiae (Aspergillus nomius).